The primary structure comprises 418 residues: Magnesium-chelatase subunit ChlI-2, chloroplastic (418 aa).

Residues 1-55 constitute a chloroplast transit peptide; the sequence is MASLLGRSPSSILTCPRISSPSSTSSMSHLCFGPEKLSGRIQFNPKKNRSRYHVS. The residue at position 56 (valine 56) is an N-acetylvaline. 2 disulfide bridges follow: cysteine 96/cysteine 187 and cysteine 348/cysteine 390. Position 113 to 120 (113 to 120) interacts with ATP; it reads GDRGTGKS.

The protein belongs to the Mg-chelatase subunits D/I family. The magnesium chelatase complex is a heterotrimer consisting of subunits CHLI, CHLD and CHLH. Expressed in leaves.

It is found in the plastid. It localises to the chloroplast. The catalysed reaction is protoporphyrin IX + Mg(2+) + ATP + H2O = Mg-protoporphyrin IX + ADP + phosphate + 3 H(+). It participates in porphyrin-containing compound metabolism; chlorophyll biosynthesis. Redox regulation; active in reducing conditions, inactive in oxidizing conditions. Thioredoxins f and m mediate the reversible reductive activation of oxidized CHLI2. Involved in chlorophyll biosynthesis. Catalyzes the insertion of magnesium ion into protoporphyrin IX to yield Mg-protoporphyrin IX. The reaction takes place in two steps, with an ATP-dependent activation followed by an ATP-dependent chelation step. Possesses low affinity for ATP and may play a limited role in chlorophyll biosynthesis, and contributes to the assembly of the Mg-chelatase complex. The polypeptide is Magnesium-chelatase subunit ChlI-2, chloroplastic (CHLI2) (Arabidopsis thaliana (Mouse-ear cress)).